The chain runs to 107 residues: MEVNKLIEELVEVIKDRKNDIIFSYLFEEESDKILKKIGEKSSEVIIACKNASKEEQVHEISDLIYNLMVLMMKQNIEIENVIEELGKRRNMTLNKKSTKSVYPSIH.

The protein belongs to the PRA-PH family.

It is found in the cytoplasm. The enzyme catalyses 1-(5-phospho-beta-D-ribosyl)-ATP + H2O = 1-(5-phospho-beta-D-ribosyl)-5'-AMP + diphosphate + H(+). The protein operates within amino-acid biosynthesis; L-histidine biosynthesis; L-histidine from 5-phospho-alpha-D-ribose 1-diphosphate: step 2/9. The sequence is that of Phosphoribosyl-ATP pyrophosphatase (hisE) from Clostridium tetani (strain Massachusetts / E88).